Here is a 144-residue protein sequence, read N- to C-terminus: NADPH-dependent 7-cyano-7-deazaguanine reductase (144 aa).

Over residues Met-1–Thr-21 the composition is skewed to polar residues. The disordered stretch occupies residues Met-1–Gly-27. The active-site Thioimide intermediate is Cys-61. Asp-68 (proton donor) is an active-site residue. Residues Val-83–Leu-85 and His-102–Glu-103 contribute to the substrate site.

It belongs to the GTP cyclohydrolase I family. QueF type 1 subfamily.

It localises to the cytoplasm. The enzyme catalyses 7-aminomethyl-7-carbaguanine + 2 NADP(+) = 7-cyano-7-deazaguanine + 2 NADPH + 3 H(+). It functions in the pathway tRNA modification; tRNA-queuosine biosynthesis. Functionally, catalyzes the NADPH-dependent reduction of 7-cyano-7-deazaguanine (preQ0) to 7-aminomethyl-7-deazaguanine (preQ1). The chain is NADPH-dependent 7-cyano-7-deazaguanine reductase from Acaryochloris marina (strain MBIC 11017).